The following is a 257-amino-acid chain: Zinc uptake system ATP-binding protein ZurA (257 aa).

Positions 5–241 constitute an ABC transporter domain; sequence IEVNNVSYHY…ADRELEILAE (237 aa). 37 to 44 is an ATP binding site; the sequence is GPNGSGKS.

This sequence belongs to the ABC transporter superfamily.

In terms of biological role, involved in a zinc uptake transport system. The chain is Zinc uptake system ATP-binding protein ZurA (zurA) from Listeria monocytogenes serovar 1/2a (strain ATCC BAA-679 / EGD-e).